The sequence spans 148 residues: UPF0179 protein Mboo_1959 (148 aa).

The protein belongs to the UPF0179 family.

This is UPF0179 protein Mboo_1959 from Methanoregula boonei (strain DSM 21154 / JCM 14090 / 6A8).